Consider the following 315-residue polypeptide: Porphobilinogen deaminase (315 aa).

Cysteine 234 carries the S-(dipyrrolylmethanemethyl)cysteine modification.

The protein belongs to the HMBS family. In terms of assembly, monomer. It depends on dipyrromethane as a cofactor.

The catalysed reaction is 4 porphobilinogen + H2O = hydroxymethylbilane + 4 NH4(+). The protein operates within porphyrin-containing compound metabolism; protoporphyrin-IX biosynthesis; coproporphyrinogen-III from 5-aminolevulinate: step 2/4. In terms of biological role, tetrapolymerization of the monopyrrole PBG into the hydroxymethylbilane pre-uroporphyrinogen in several discrete steps. The protein is Porphobilinogen deaminase of Mycobacterium avium (strain 104).